The following is a 636-amino-acid chain: DNA gyrase subunit B (636 aa).

Residues 421–535 (TELFIVEGDS…QGRVYIALPP (115 aa)) form the Toprim domain. Residues Glu427, Asp500, and Asp502 each coordinate Mg(2+).

Belongs to the type II topoisomerase GyrB family. Heterotetramer, composed of two GyrA and two GyrB chains. In the heterotetramer, GyrA contains the active site tyrosine that forms a transient covalent intermediate with DNA, while GyrB binds cofactors and catalyzes ATP hydrolysis. It depends on Mg(2+) as a cofactor. Mn(2+) serves as cofactor. Ca(2+) is required as a cofactor.

The protein resides in the cytoplasm. It catalyses the reaction ATP-dependent breakage, passage and rejoining of double-stranded DNA.. Functionally, a type II topoisomerase that negatively supercoils closed circular double-stranded (ds) DNA in an ATP-dependent manner to modulate DNA topology and maintain chromosomes in an underwound state. Negative supercoiling favors strand separation, and DNA replication, transcription, recombination and repair, all of which involve strand separation. Also able to catalyze the interconversion of other topological isomers of dsDNA rings, including catenanes and knotted rings. Type II topoisomerases break and join 2 DNA strands simultaneously in an ATP-dependent manner. The protein is DNA gyrase subunit B of Thermotoga maritima (strain ATCC 43589 / DSM 3109 / JCM 10099 / NBRC 100826 / MSB8).